A 1209-amino-acid chain; its full sequence is Phospholipid-transporting ATPase ID (1209 aa).

Over 1–68 (MTVPKEIPEK…NIVTFLPVNL (68 aa)) the chain is Cytoplasmic. Residues 12–36 (ARAGAPPSWSQKKPSWGTEEERRAR) form a disordered region. The chain crosses the membrane as a helical span at residues 69–89 (FEQFQEVANTYFLFLLILQLI). Residues 90–91 (PQ) lie on the Exoplasmic loop side of the membrane. The helical transmembrane segment at 92–112 (ISSLSWFTTIVPLVLVLTITA) threads the bilayer. The Cytoplasmic segment spans residues 113 to 295 (VKDATDDYFR…TSIDRLMNTL (183 aa)). A helical transmembrane segment spans residues 296–316 (VLWIFGFLVCMGVILAIGNAI). Residues 317 to 338 (WEHEVGTRFQVYLPWDEAVDSA) lie on the Exoplasmic loop side of the membrane. Residues 339 to 359 (FFSGFLSFWSYIIILNTVVPI) form a helical membrane-spanning segment. Residues 360–898 (SLYVSVEVIR…KFLCYFFYKN (539 aa)) lie on the Cytoplasmic side of the membrane. Asp-411 functions as the 4-aspartylphosphate intermediate in the catalytic mechanism. Asp-411, Lys-412, Thr-413, Glu-515, Phe-556, Lys-579, Arg-613, Thr-693, Gly-694, Asp-695, Arg-807, and Lys-813 together coordinate ATP. Asp-411 contributes to the Mg(2+) binding site. Mg(2+) is bound at residue Thr-413. Asp-833 contributes to the Mg(2+) binding site. Asn-836 and Asp-837 together coordinate ATP. Asp-837 serves as a coordination point for Mg(2+). The chain crosses the membrane as a helical span at residues 899 to 919 (FAFTMVHFWFGFFCGFSAQTV). The Exoplasmic loop portion of the chain corresponds to 920 to 922 (YDQ). A helical transmembrane segment spans residues 923–943 (YFITLYNIVYTSLPVLAMGVF). The Cytoplasmic portion of the chain corresponds to 944–972 (DQDVPEQRSMEYPKLYEPGQLNLLFNKRE). The helical transmembrane segment at 973–993 (FFICIAQGIYTSVLMFFIPYG) threads the bilayer. The Exoplasmic loop portion of the chain corresponds to 994-1011 (VFAEATRDDGTQLADYQS). Residues 1012 to 1032 (FAVTVATSLVIVVSVQIGLDT) form a helical membrane-spanning segment. At 1033–1036 (GYWT) the chain is on the cytoplasmic side. A helical transmembrane segment spans residues 1037-1057 (AINHFFIWGSLAVYFAILFAM). The Exoplasmic loop segment spans residues 1058 to 1082 (HSNGLFDMFPNQFRFVGNAQNTLAQ). A helical transmembrane segment spans residues 1083–1103 (PTVWLTIALTTAVCIMPVVAF). The Cytoplasmic segment spans residues 1104–1209 (RFLRLSLKPD…SGGAEKPLKG (106 aa)). Ser-1175 carries the post-translational modification Phosphoserine. The interval 1179–1209 (RSSSSWIESLRRKKSDSANSPSGGAEKPLKG) is disordered.

It belongs to the cation transport ATPase (P-type) (TC 3.A.3) family. Type IV subfamily. Component of a P4-ATPase flippase complex which consists of a catalytic alpha subunit ATP8B2 and an accessory beta subunit TMEM30A or TMEM30B. It depends on Mg(2+) as a cofactor. In terms of tissue distribution, expressed in brain and testes (at protein level).

It is found in the cell membrane. The protein localises to the endoplasmic reticulum membrane. It carries out the reaction ATP + H2O + phospholipidSide 1 = ADP + phosphate + phospholipidSide 2.. It catalyses the reaction a 1,2-diacyl-sn-glycero-3-phosphocholine(out) + ATP + H2O = a 1,2-diacyl-sn-glycero-3-phosphocholine(in) + ADP + phosphate + H(+). In terms of biological role, catalytic component of P4-ATPase flippase complex, which catalyzes the hydrolysis of ATP coupled to the transport of phosphatidylcholine (PC) from the outer to the inner leaflet of the plasma membrane. May contribute to the maintenance of membrane lipid asymmetry. The polypeptide is Phospholipid-transporting ATPase ID (Mus musculus (Mouse)).